The following is a 463-amino-acid chain: ATP sulfurylase 1, chloroplastic (463 aa).

Residues 1-48 (MASMAAVLSKTPFLSQPLTKSSPNSDLPFAAVSFPSKSLRRRVGSIRA) constitute a chloroplast transit peptide.

Belongs to the sulfate adenylyltransferase family. Homotetramer.

The protein resides in the plastid. It is found in the chloroplast stroma. It carries out the reaction sulfate + ATP + H(+) = adenosine 5'-phosphosulfate + diphosphate. Its pathway is sulfur metabolism; hydrogen sulfide biosynthesis; sulfite from sulfate: step 1/3. Mediates selenate (Se) reduction, and promotes Se and sulfur (S) uptake and assimilation. The polypeptide is ATP sulfurylase 1, chloroplastic (APS1) (Arabidopsis thaliana (Mouse-ear cress)).